The following is a 434-amino-acid chain: Putative F-box/FBD/LRR-repeat protein At1g16940 (434 aa).

One can recognise an F-box domain in the interval 10–66 (HNIINQLPDSLLCEIFFNLPTEEVVKTSLICRRWRYVWQSLPGLDLVINGSKNYDKF). LRR repeat units lie at residues 72-99 (FMFL…MMNN), 114-141 (RRYV…KLHR), 164-189 (INFV…TMDK), 204-231 (CLTN…KLNR), 252-277 (DVAY…TISF), and 306-331 (MAVG…VMGF). The FBD domain occupies 336–385 (WGINFSDVPQCVLSSLEFVEVKAREVADMKKLWSYFMENSTVLKKFTLCL).

In Arabidopsis thaliana (Mouse-ear cress), this protein is Putative F-box/FBD/LRR-repeat protein At1g16940.